Reading from the N-terminus, the 153-residue chain is Ribonuclease P protein component (153 aa).

This sequence belongs to the RnpA family. In terms of assembly, consists of a catalytic RNA component (M1 or rnpB) and a protein subunit.

The enzyme catalyses Endonucleolytic cleavage of RNA, removing 5'-extranucleotides from tRNA precursor.. Its function is as follows. RNaseP catalyzes the removal of the 5'-leader sequence from pre-tRNA to produce the mature 5'-terminus. It can also cleave other RNA substrates such as 4.5S RNA. The protein component plays an auxiliary but essential role in vivo by binding to the 5'-leader sequence and broadening the substrate specificity of the ribozyme. This is Ribonuclease P protein component from Helicobacter acinonychis (strain Sheeba).